Here is a 253-residue protein sequence, read N- to C-terminus: Major prion protein (253 aa).

The first 22 residues, 1–22 (MANLGCWMLVLFVATWSNLGLC), serve as a signal peptide directing secretion. The tract at residues 23–38 (KKRPKPGGWNTGGSRY) is interaction with ADGRG6. An interaction with GRB2, ERI3 and SYN1 region spans residues 23 to 230 (KKRPKPGGWN…ESQAYYQRGS (208 aa)). The tract at residues 25-108 (RPKPGGWNTG…WNKPSKPKTN (84 aa)) is disordered. Tandem repeats lie at residues 51-59 (PQGGGGWGQ), 60-67 (PHGGGWGQ), 68-75 (PHGGGWGQ), 76-83 (PHGGGWGQ), and 84-91 (PHGGGWGQ). Residues 51 to 91 (PQGGGGWGQPHGGGWGQPHGGGWGQPHGGGWGQPHGGGWGQ) form a 5 X 8 AA tandem repeats of P-H-G-G-G-W-G-Q region. Residues 52–95 (QGGGGWGQPHGGGWGQPHGGGWGQPHGGGWGQPHGGGWGQGGGT) are compositionally biased toward gly residues. Cu(2+) is bound by residues His-61, Gly-62, Gly-63, His-69, Gly-70, Gly-71, His-77, Gly-78, Gly-79, His-85, Gly-86, and Gly-87. Cysteines 179 and 214 form a disulfide. 2 N-linked (GlcNAc...) asparagine glycosylation sites follow: Asn-181 and Asn-197. A lipid anchor (GPI-anchor amidated serine) is attached at Ser-230. The propeptide at 231–253 (SMVLFSSPPVILLISFLIFLIVG) is removed in mature form.

The protein belongs to the prion family. In terms of assembly, monomer and homodimer. Has a tendency to aggregate into amyloid fibrils containing a cross-beta spine, formed by a steric zipper of superposed beta-strands. Soluble oligomers may represent an intermediate stage on the path to fibril formation. Copper binding may promote oligomerization. Interacts with GRB2, APP, ERI3/PRNPIP and SYN1. Mislocalized cytosolically exposed PrP interacts with MGRN1; this interaction alters MGRN1 subcellular location and causes lysosomal enlargement. Interacts with APP. Interacts with KIAA1191. Interacts with ADGRG6.

The protein localises to the cell membrane. It is found in the golgi apparatus. In terms of biological role, its primary physiological function is unclear. May play a role in neuronal development and synaptic plasticity. May be required for neuronal myelin sheath maintenance. May promote myelin homeostasis through acting as an agonist for ADGRG6 receptor. May play a role in iron uptake and iron homeostasis. Soluble oligomers are toxic to cultured neuroblastoma cells and induce apoptosis (in vitro). Association with GPC1 (via its heparan sulfate chains) targets PRNP to lipid rafts. Also provides Cu(2+) or Zn(2+) for the ascorbate-mediated GPC1 deaminase degradation of its heparan sulfate side chains. The chain is Major prion protein (PRNP) from Pongo pygmaeus (Bornean orangutan).